The sequence spans 130 residues: DNA-directed RNA polymerase subunit omega (130 aa).

The tract at residues 110–130 (EELLKGLEGLAPPEEQPEEDE) is disordered.

The protein belongs to the RNA polymerase subunit omega family. As to quaternary structure, the RNAP catalytic core consists of 2 alpha, 1 beta, 1 beta' and 1 omega subunit. When a sigma factor is associated with the core the holoenzyme is formed, which can initiate transcription.

It catalyses the reaction RNA(n) + a ribonucleoside 5'-triphosphate = RNA(n+1) + diphosphate. Functionally, promotes RNA polymerase assembly. Latches the N- and C-terminal regions of the beta' subunit thereby facilitating its interaction with the beta and alpha subunits. The polypeptide is DNA-directed RNA polymerase subunit omega (Rhodopseudomonas palustris (strain HaA2)).